Here is a 76-residue protein sequence, read N- to C-terminus: uncharacterized protein (76 aa).

Transmembrane regions (helical) follow at residues 16 to 33 (FAFT…GAVL) and 45 to 61 (TMFL…FFCA).

The protein localises to the cell membrane. This is an uncharacterized protein from Bacillus subtilis (strain 168).